The following is an 889-amino-acid chain: Rho GTPase-activating protein 27 (889 aa).

The SH3 domain maps to 6 to 69; sequence VGDVYVLVEH…PAQYVRELPA (64 aa). The tract at residues 104–132 is disordered; it reads AGPDGAPEESGGRASSLCGPAQRGAATQR. Residues Ser-156, Ser-216, and Ser-249 each carry the phosphoserine modification. WW domains lie at 246 to 280 and 299 to 333; these read PLPS…SPFE and VSLE…DEAE. The span at 329–341 shows a compositional bias: acidic residues; sequence EDEAENEPEEELE. The tract at residues 329 to 397 is disordered; it reads EDEAENEPEE…SPLTTPPGWS (69 aa). Ser-347 is subject to Phosphoserine. The segment covering 383–395 has biased composition (low complexity); sequence EPGPTSPLTTPPG. Residues 411–444 enclose the WW 3 domain; it reads HFTQEQWVRLEDPHGKPYFYNPEDSSVRWELPQV. The disordered stretch occupies residues 447–474; that stretch reads PAPRSIHKSSQDGDTPAQASPPEEKVPA. Ser-456 bears the Phosphoserine mark. Position 461 is a phosphothreonine (Thr-461). Residue Ser-466 is modified to Phosphoserine. The region spanning 496–612 is the PH domain; the sequence is TLDKAGVLHR…WHKAIAQGIQ (117 aa). Residues 617-655 are disordered; sequence ELPPEESESSRVDFGSSERLGSWQEKEEDARPNAAAPAL. Residues 697 to 886 form the Rho-GAP domain; sequence CALAALCERE…LILQQCADIF (190 aa).

Interacts with SH3KBP1/CIN85. As to expression, expressed in germinal center B-cell, spleen, chronic lymphocytic leukemia, pancreatic cancer and lung cancer.

It localises to the cytoplasm. The protein localises to the membrane. Functionally, rho GTPase-activating protein which may be involved in clathrin-mediated endocytosis. GTPase activators for the Rho-type GTPases act by converting them to an inactive GDP-bound state. Has activity toward CDC42 and RAC1. The polypeptide is Rho GTPase-activating protein 27 (Homo sapiens (Human)).